Here is a 314-residue protein sequence, read N- to C-terminus: Protein ATP1B4 (314 aa).

Over residues methionine 1–serine 17 the composition is skewed to polar residues. Positions methionine 1 to glutamine 37 are disordered. Residues methionine 1–alanine 69 are Cytoplasmic-facing. The span at serine 19–glutamine 37 shows a compositional bias: basic and acidic residues. The chain crosses the membrane as a helical span at residues leucine 70–isoleucine 90. The Extracellular portion of the chain corresponds to tyrosine 91–glycine 314. Cysteine 160 and cysteine 179 are disulfide-bonded. Asparagine 188 carries an N-linked (GlcNAc...) asparagine glycan. Disulfide bonds link cysteine 189–cysteine 205 and cysteine 228–cysteine 287. The N-linked (GlcNAc...) asparagine glycan is linked to asparagine 264.

Belongs to the X(+)/potassium ATPases subunit beta family. In terms of assembly, composed of two subunits: alpha (catalytic) and beta (accessory). In terms of processing, glycosylated. Expressed in skeletal muscle, liver, lung, kidney, heart, brain and skin.

Its subcellular location is the membrane. Functionally, this is the non-catalytic component of the active enzyme, which catalyzes the hydrolysis of ATP coupled with the exchange of Na(+) and K(+) ions across the plasma membrane. The protein is Protein ATP1B4 (atp1b4) of Xenopus laevis (African clawed frog).